Here is a 492-residue protein sequence, read N- to C-terminus: UDP-N-acetylmuramate--L-alanine ligase (492 aa).

Residue 126–132 (GTHGKTT) coordinates ATP.

It belongs to the MurCDEF family.

It is found in the cytoplasm. It carries out the reaction UDP-N-acetyl-alpha-D-muramate + L-alanine + ATP = UDP-N-acetyl-alpha-D-muramoyl-L-alanine + ADP + phosphate + H(+). It functions in the pathway cell wall biogenesis; peptidoglycan biosynthesis. Functionally, cell wall formation. This chain is UDP-N-acetylmuramate--L-alanine ligase, found in Serratia proteamaculans (strain 568).